The primary structure comprises 3430 residues: Genome polyprotein (3430 aa).

The tract at residues 2–15 is interaction with host EXOC1; it reads SKKPGGPGKNRAVN. At 2–105 the chain is on the cytoplasmic side; the sequence is SKKPGGPGKN…NRRSTKQKKR (104 aa). The hydrophobic; homodimerization of capsid protein C stretch occupies residues 37-72; it reads LIDGKGPIRFVLALLAFFRFTAIAPTRAVLDRWRGV. Residues 106-123 constitute a propeptide, ER anchor for the capsid protein C, removed in mature form by serine protease NS3; the sequence is GGTAGFTILLGLIACAGA. A helical membrane pass occupies residues 106 to 126; that stretch reads GGTAGFTILLGLIACAGAVTL. Topologically, residues 127 to 248 are extracellular; sequence SNFQGKVMMT…KATRYLVKTE (122 aa). Residue N138 is glycosylated (N-linked (GlcNAc...) asparagine; by host). The helical transmembrane segment at 249–269 threads the bilayer; sequence SWILRNPGYALVAAVIGWMLG. At 270-275 the chain is on the cytoplasmic side; the sequence is SNTMQR. Residues 276–290 form a helical membrane-spanning segment; that stretch reads VVFAILLLLVAPAYS. At 291 to 739 the chain is on the extracellular side; the sequence is FNCLGMSNRD…QVFGGAFRSL (449 aa). Disulfide bonds link C293–C320, C350–C406, C364–C395, C382–C411, C476–C574, and C591–C622. The interval 388 to 401 is fusion peptide; that stretch reads DRGWGNGCGLFGKG. The chain crosses the membrane as a helical span at residues 740–760; it reads FGGMSWITQGLLGALLLWMGI. Topologically, residues 761-766 are cytoplasmic; sequence NARDRS. A helical transmembrane segment spans residues 767-787; sequence IAMTFLAVGGVLLFLSVNVHA. Over 788-1212 the chain is Extracellular; that stretch reads DTGCAIDIGR…AFAEANSGGD (425 aa). 2 disulfide bridges follow: C791-C802 and C842-C930. N917, N962, and N994 each carry an N-linked (GlcNAc...) asparagine; by host glycan. Cystine bridges form between C966-C1010, C1067-C1116, C1078-C1099, and C1100-C1103. A helical transmembrane segment spans residues 1213–1233; the sequence is VVHLALMATFKIQPVFLVASF. At 1234–1243 the chain is on the cytoplasmic side; it reads LKARWTNQES. A helical transmembrane segment spans residues 1244–1264; the sequence is ILLMLAAAFFQMAYYDAKNVL. At 1265–1278 the chain is on the lumenal side; the sequence is SWEVPDVLNSLSVA. Residues 1279–1299 traverse the membrane as a helical segment; it reads WMILRAISFTNTSNVVVPLLA. At 1300-1307 the chain is on the cytoplasmic side; that stretch reads LLTPGLKC. Residues 1308–1328 traverse the membrane as a helical segment; that stretch reads LNLDVYRILLLMVGVGSLIKE. Over 1329–1340 the chain is Lumenal; it reads KRSSAAKKKGAC. Residues 1341 to 1361 form a helical membrane-spanning segment; it reads LICLALASTGVFNPMILAAGL. Residues 1362 to 1371 are Cytoplasmic-facing; it reads MACDPNRKRG. Residues 1372-1392 form a helical membrane-spanning segment; that stretch reads WPATEVMTAVGLMFAIVGGLA. The Lumenal segment spans residues 1393–1395; that stretch reads ELD. Residues 1396–1416 form a helical membrane-spanning segment; that stretch reads IDSMAIPMTIAGLMFAAFVIS. At 1417 to 1473 the chain is on the cytoplasmic side; that stretch reads GKSTDMWIERTADITWESDAEITGSSERVDVRLDDDGNFQLMNDPGAPWKIWMLRMA. An interacts with and activates NS3 protease region spans residues 1424–1463; sequence IERTADITWESDAEITGSSERVDVRLDDDGNFQLMNDPGA. The segment at residues 1474-1494 is an intramembrane region (helical); the sequence is CLAISAYTPWAILPSVIGFWI. At 1495-2170 the chain is on the cytoplasmic side; it reads TLQYTKRGGV…RMALEELPDA (676 aa). Residues 1502–1679 form the Peptidase S7 domain; sequence GGVLWDTPSP…ERMEEPAPAG (178 aa). Residues H1552, D1576, and S1636 each act as charge relay system; for serine protease NS3 activity in the active site. Positions 1682-1838 constitute a Helicase ATP-binding domain; that stretch reads PEMLRKKQIT…ESNAPISDMQ (157 aa). The tract at residues 1686 to 1689 is important for RNA-binding; it reads RKKQ. 1695 to 1702 is a binding site for ATP; the sequence is LHPGAGKT. Residues 1786-1789 carry the DEAH box motif; the sequence is DEAH. Residues 1849–2014 enclose the Helicase C-terminal domain; it reads GYEWITEYVG…GLVAQLYQPE (166 aa). N6-acetyllysine; by host is present on K1890. The interval 2165-2169 is regulates the ATPase activity of NS3 helicase; the sequence is EELPD. Residues 2171 to 2191 traverse the membrane as a helical segment; sequence LQTIVLIALLSVMSLGVFFLL. Residues 2192 to 2196 are Lumenal-facing; the sequence is MQRKG. The helical intramembrane region spans 2197–2217; it reads IGKIGLGGVILGAATFFCWMA. E2218 is a topological domain (lumenal). A helical membrane pass occupies residues 2219–2239; sequence VPGTKIAGMLLLSLLLMIVLI. At 2240–2254 the chain is on the cytoplasmic side; that stretch reads PEPEKQRSQTDNQLA. The helical transmembrane segment at 2255-2275 threads the bilayer; that stretch reads VFLICVLTLVGAVAANEMGWL. Topologically, residues 2276–2309 are lumenal; sequence DKTKNDIGSLLGHRPEARETTLGVESFLLDLRPA. Residues 2310-2330 constitute an intramembrane region (helical); that stretch reads TAWSLYAVTTAVLTPLLKHLI. The Lumenal portion of the chain corresponds to 2331–2377; sequence TSDYINTSLTSINVQASALFTLARGFPFVDVGVSALLLAVGCWGQVT. A helical membrane pass occupies residues 2378–2398; it reads LTVTVTAAALLFCHYAYMVPG. Over 2399-2441 the chain is Cytoplasmic; that stretch reads WQAEAMRSAQRRTAAGIMKNVVVDGIVATDVPELERTTPVMQK. The chain crosses the membrane as a helical span at residues 2442–2462; the sequence is KVGQIILILVSMAAVVVNPSV. Residues 2463–2467 are Lumenal-facing; sequence RTVRE. The chain crosses the membrane as a helical span at residues 2468–2488; sequence AGILTTAAAVTLWENGASSVW. The Cytoplasmic portion of the chain corresponds to 2489-3430; the sequence is NATTAIGLCH…DTIVVEDTVL (942 aa). One can recognise an mRNA cap 0-1 NS5-type MT domain in the interval 2526 to 2791; it reads GGAKGRTLGE…DVNLGSGTRA (266 aa). S2581 is an S-adenosyl-L-methionine binding site. S2581 is modified (phosphoserine). K2586 serves as the catalytic For 2'-O-MTase activity. The S-adenosyl-L-methionine site is built by G2611, W2612, T2629, K2630, D2656, and V2657. D2671 serves as the catalytic For 2'-O-MTase activity. Residue I2672 participates in S-adenosyl-L-methionine binding. Catalysis depends on for 2'-O-MTase activity residues K2707 and E2743. Y2745 contacts S-adenosyl-L-methionine. A Nuclear localization signal motif is present at residues 2914 to 2916; that stretch reads RDK. Positions 2965, 2969, 2974, and 2977 each coordinate Zn(2+). Residues 3055–3207 form the RdRp catalytic domain; the sequence is GKVYADDTAG…KPLDDRFATS (153 aa). Residues H3242, C3258, and C3377 each contribute to the Zn(2+) site. The short motif at 3428–3430 is the PDZ-binding element; it reads TVL.

This sequence in the N-terminal section; belongs to the class I-like SAM-binding methyltransferase superfamily. mRNA cap 0-1 NS5-type methyltransferase family. In terms of assembly, homodimer. Interacts (via N-terminus) with host EXOC1 (via C-terminus); this interaction results in EXOC1 degradation through the proteasome degradation pathway. Interacts with host DDX56; this interaction plays an important role in genomic RNA encapsidation. Forms heterodimers with envelope protein E in the endoplasmic reticulum and Golgi. As to quaternary structure, homodimer; in the endoplasmic reticulum and Golgi. In terms of assembly, homodimer; Homohexamer when secreted. Interacts with envelope protein E. NS1 interacts with NS4B. Interacts with host complement protein CFH; this interaction leads to the degradation of C3. Interacts (via N-terminus) with serine protease NS3. As to quaternary structure, forms a heterodimer with serine protease NS3. May form homooligomers. In terms of assembly, forms a heterodimer with NS2B. Interacts with NS4B. Interacts with unphosphorylated RNA-directed RNA polymerase NS5; this interaction stimulates RNA-directed RNA polymerase NS5 guanylyltransferase activity. Interacts with Serine protease/Helicase NS3. Interacts with NS1. As to quaternary structure, homodimer. Interacts with host STAT2; this interaction inhibits the phosphorylation of the latter, and, when all viral proteins are present (polyprotein), targets STAT2 for degradation. Interacts with host PAF1 complex. In terms of processing, specific enzymatic cleavages in vivo yield mature proteins. Cleavages in the lumen of endoplasmic reticulum are performed by host signal peptidase, whereas cleavages in the cytoplasmic side are performed by serine protease NS3. Signal cleavage at the 2K-4B site requires a prior NS3 protease-mediated cleavage at the 4A-2K site. Post-translationally, cleaved in post-Golgi vesicles by a host furin, releasing the mature small envelope protein M, and peptide pr. This cleavage is incomplete as up to 30% of viral particles still carry uncleaved prM. Not N-glycosylated. In terms of processing, N-glycosylated. The excreted form is glycosylated and this is required for efficient secretion of the protein from infected cells. Post-translationally, acetylated by host KAT5. Acetylation modulates NS3 RNA-binding and unwinding activities and plays an important positive role for viral replication. Phosphorylated on serines residues. This phosphorylation may trigger NS5 nuclear localization.

The protein localises to the virion. It is found in the host nucleus. The protein resides in the host cytoplasm. It localises to the host perinuclear region. Its subcellular location is the secreted. The protein localises to the virion membrane. It is found in the host endoplasmic reticulum membrane. The enzyme catalyses Selective hydrolysis of -Xaa-Xaa-|-Yaa- bonds in which each of the Xaa can be either Arg or Lys and Yaa can be either Ser or Ala.. It carries out the reaction RNA(n) + a ribonucleoside 5'-triphosphate = RNA(n+1) + diphosphate. The catalysed reaction is a ribonucleoside 5'-triphosphate + H2O = a ribonucleoside 5'-diphosphate + phosphate + H(+). It catalyses the reaction ATP + H2O = ADP + phosphate + H(+). The enzyme catalyses a 5'-end (5'-triphosphoguanosine)-ribonucleoside in mRNA + S-adenosyl-L-methionine = a 5'-end (N(7)-methyl 5'-triphosphoguanosine)-ribonucleoside in mRNA + S-adenosyl-L-homocysteine. It carries out the reaction a 5'-end (N(7)-methyl 5'-triphosphoguanosine)-ribonucleoside in mRNA + S-adenosyl-L-methionine = a 5'-end (N(7)-methyl 5'-triphosphoguanosine)-(2'-O-methyl-ribonucleoside) in mRNA + S-adenosyl-L-homocysteine + H(+). In terms of biological role, plays a role in virus budding by binding to the cell membrane and gathering the viral RNA into a nucleocapsid that forms the core of a mature virus particle. During virus entry, may induce genome penetration into the host cytoplasm after hemifusion induced by the surface proteins. Can migrate to the cell nucleus where it modulates host functions. Overcomes the anti-viral effects of host EXOC1 by sequestering and degrading the latter through the proteasome degradation pathway. Functionally, inhibits RNA silencing by interfering with host Dicer. Its function is as follows. Prevents premature fusion activity of envelope proteins in trans-Golgi by binding to envelope protein E at pH6.0. After virion release in extracellular space, gets dissociated from E dimers. Acts as a chaperone for envelope protein E during intracellular virion assembly by masking and inactivating envelope protein E fusion peptide. prM is the only viral peptide matured by host furin in the trans-Golgi network probably to avoid catastrophic activation of the viral fusion activity in acidic Golgi compartment prior to virion release. prM-E cleavage is inefficient, and many virions are only partially matured. These uncleaved prM would play a role in immune evasion. In terms of biological role, may play a role in virus budding. Exerts cytotoxic effects by activating a mitochondrial apoptotic pathway through M ectodomain. May display a viroporin activity. Functionally, binds to host cell surface receptor and mediates fusion between viral and cellular membranes. Envelope protein is synthesized in the endoplasmic reticulum in the form of heterodimer with protein prM. They play a role in virion budding in the ER, and the newly formed immature particle is covered with 60 spikes composed of heterodimer between precursor prM and envelope protein E. The virion is transported to the Golgi apparatus where the low pH causes dissociation of PrM-E heterodimers and formation of E homodimers. prM-E cleavage is inefficient, and many virions are only partially matured. These uncleaved prM would play a role in immune evasion. Its function is as follows. Involved in immune evasion, pathogenesis and viral replication. Once cleaved off the polyprotein, is targeted to three destinations: the viral replication cycle, the plasma membrane and the extracellular compartment. Essential for viral replication. Required for formation of the replication complex and recruitment of other non-structural proteins to the ER-derived membrane structures. Excreted as a hexameric lipoparticle that plays a role against host immune response. Antagonizing the complement function. Binds to the host macrophages and dendritic cells. Inhibits signal transduction originating from Toll-like receptor 3 (TLR3). Component of the viral RNA replication complex that functions in virion assembly and antagonizes the host alpha/beta interferon antiviral response. In terms of biological role, required cofactor for the serine protease function of NS3. May have membrane-destabilizing activity and form viroporins. Functionally, displays three enzymatic activities: serine protease, NTPase and RNA helicase. NS3 serine protease, in association with NS2B, performs its autocleavage and cleaves the polyprotein at dibasic sites in the cytoplasm: C-prM, NS2A-NS2B, NS2B-NS3, NS3-NS4A, NS4A-2K and NS4B-NS5. NS3 RNA helicase binds RNA and unwinds dsRNA in the 3' to 5' direction. NS3 supports the separation of RNA daughter and template strands during viral replication. The helicase part is involved in the inhibition of phosphorylation of host STAT1, and thereby inhibition of host type-I IFN signaling. In addition, NS3 assists the initiation of replication by unwinding the RNA secondary structure in the 3' non-translated region (NTR). Inhibits STAT2 translocation in the nucleus after IFN-alpha treatment. Its function is as follows. Regulates the ATPase activity of the NS3 helicase activity. NS4A allows NS3 helicase to conserve energy during unwinding. Functions as a signal peptide for NS4B and is required for the interferon antagonism activity of the latter. In terms of biological role, induces the formation of ER-derived membrane vesicles where the viral replication takes place. Inhibits interferon (IFN)-induced host STAT1 phosphorylation and nuclear translocation, thereby preventing the establishment of cellular antiviral state by blocking the IFN-alpha/beta pathway. Inhibits STAT2 translocation in the nucleus after IFN-alpha treatment. Functionally, replicates the viral (+) and (-) RNA genome, and performs the capping of genomes in the cytoplasm. NS5 methylates viral RNA cap at guanine N-7 and ribose 2'-O positions. Besides its role in RNA genome replication, also prevents the establishment of cellular antiviral state by blocking the interferon-alpha/beta (IFN-alpha/beta) signaling pathway. Inhibits host TYK2 and STAT2 phosphorylation, thereby preventing activation of JAK-STAT signaling pathway. In Aedes (Tropical bont tick), this protein is Genome polyprotein.